The following is a 225-amino-acid chain: Putative amino-acid transporter YggA (225 aa).

The next 5 helical transmembrane spans lie at 1–21, 37–57, 65–85, 116–136, and 150–170; these read MFAT…PIGA, LLTA…GVFG, SPIG…WFGI, LGVT…LGSF, and AVAM…AVVL.

It belongs to the LysE/ArgO transporter (TC 2.A.75) family.

It is found in the cell membrane. The sequence is that of Putative amino-acid transporter YggA from Aeromonas hydrophila.